Reading from the N-terminus, the 259-residue chain is GTP cyclohydrolase FolE2 (259 aa).

The protein belongs to the GTP cyclohydrolase IV family.

It catalyses the reaction GTP + H2O = 7,8-dihydroneopterin 3'-triphosphate + formate + H(+). It functions in the pathway cofactor biosynthesis; 7,8-dihydroneopterin triphosphate biosynthesis; 7,8-dihydroneopterin triphosphate from GTP: step 1/1. Converts GTP to 7,8-dihydroneopterin triphosphate. The polypeptide is GTP cyclohydrolase FolE2 (Thermosipho africanus (strain TCF52B)).